We begin with the raw amino-acid sequence, 393 residues long: Acetate kinase (393 aa).

Residue N7 coordinates Mg(2+). K14 serves as a coordination point for ATP. R90 provides a ligand contact to substrate. D147 acts as the Proton donor/acceptor in catalysis. ATP contacts are provided by residues 205-209 (HLGNG), 280-282 (DFR), and 328-332 (GIGEN). Residue E380 participates in Mg(2+) binding.

It belongs to the acetokinase family. In terms of assembly, homodimer. Mg(2+) is required as a cofactor. The cofactor is Mn(2+).

The protein resides in the cytoplasm. It catalyses the reaction acetate + ATP = acetyl phosphate + ADP. It functions in the pathway metabolic intermediate biosynthesis; acetyl-CoA biosynthesis; acetyl-CoA from acetate: step 1/2. Catalyzes the formation of acetyl phosphate from acetate and ATP. Can also catalyze the reverse reaction. The protein is Acetate kinase of Finegoldia magna (strain ATCC 29328 / DSM 20472 / WAL 2508) (Peptostreptococcus magnus).